The following is a 265-amino-acid chain: 4-hydroxy-tetrahydrodipicolinate reductase (265 aa).

NAD(+) is bound by residues 9 to 14, 100 to 102, and 124 to 127; these read GALGRM, GTT, and SPNM. His158 functions as the Proton donor/acceptor in the catalytic mechanism. His159 provides a ligand contact to (S)-2,3,4,5-tetrahydrodipicolinate. The active-site Proton donor is the Lys162. 168 to 169 contributes to the (S)-2,3,4,5-tetrahydrodipicolinate binding site; it reads GT.

The protein belongs to the DapB family.

The protein localises to the cytoplasm. The catalysed reaction is (S)-2,3,4,5-tetrahydrodipicolinate + NAD(+) + H2O = (2S,4S)-4-hydroxy-2,3,4,5-tetrahydrodipicolinate + NADH + H(+). It carries out the reaction (S)-2,3,4,5-tetrahydrodipicolinate + NADP(+) + H2O = (2S,4S)-4-hydroxy-2,3,4,5-tetrahydrodipicolinate + NADPH + H(+). It functions in the pathway amino-acid biosynthesis; L-lysine biosynthesis via DAP pathway; (S)-tetrahydrodipicolinate from L-aspartate: step 4/4. Catalyzes the conversion of 4-hydroxy-tetrahydrodipicolinate (HTPA) to tetrahydrodipicolinate. This is 4-hydroxy-tetrahydrodipicolinate reductase from Aquifex aeolicus (strain VF5).